Reading from the N-terminus, the 294-residue chain is Light-independent protochlorophyllide reductase iron-sulfur ATP-binding protein (294 aa).

ATP-binding positions include 10 to 15 (GIGKST) and K39. S14 contacts Mg(2+). C95 and C129 together coordinate [4Fe-4S] cluster. 180-181 (NR) provides a ligand contact to ATP.

It belongs to the NifH/BchL/ChlL family. As to quaternary structure, homodimer. Protochlorophyllide reductase is composed of three subunits; ChlL, ChlN and ChlB. Requires [4Fe-4S] cluster as cofactor.

It is found in the plastid. The protein localises to the chloroplast. The enzyme catalyses chlorophyllide a + oxidized 2[4Fe-4S]-[ferredoxin] + 2 ADP + 2 phosphate = protochlorophyllide a + reduced 2[4Fe-4S]-[ferredoxin] + 2 ATP + 2 H2O. The protein operates within porphyrin-containing compound metabolism; chlorophyll biosynthesis (light-independent). Its function is as follows. Component of the dark-operative protochlorophyllide reductase (DPOR) that uses Mg-ATP and reduced ferredoxin to reduce ring D of protochlorophyllide (Pchlide) to form chlorophyllide a (Chlide). This reaction is light-independent. The L component serves as a unique electron donor to the NB-component of the complex, and binds Mg-ATP. In Pleurastrum terricola (Filamentous green alga), this protein is Light-independent protochlorophyllide reductase iron-sulfur ATP-binding protein.